Consider the following 269-residue polypeptide: Phosphonoacetaldehyde hydrolase (269 aa).

Aspartate 10 functions as the Nucleophile in the catalytic mechanism. 2 residues coordinate Mg(2+): aspartate 10 and alanine 12. Lysine 52 (schiff-base intermediate with substrate) is an active-site residue. Aspartate 186 serves as a coordination point for Mg(2+).

Belongs to the HAD-like hydrolase superfamily. PhnX family. Homodimer. The cofactor is Mg(2+).

It carries out the reaction phosphonoacetaldehyde + H2O = acetaldehyde + phosphate + H(+). Functionally, involved in phosphonate degradation. The polypeptide is Phosphonoacetaldehyde hydrolase (phnX) (Salmonella typhimurium (strain LT2 / SGSC1412 / ATCC 700720)).